The sequence spans 464 residues: Trigger factor (464 aa).

The region spanning 162 to 243 (GDFISIDLSA…VGTVKERELP (82 aa)) is the PPIase FKBP-type domain. Positions 428–464 (GASVDTAELFGNGEADTEEAASTDEVASDSAEGEDQK) are disordered.

This sequence belongs to the FKBP-type PPIase family. Tig subfamily.

The protein resides in the cytoplasm. It carries out the reaction [protein]-peptidylproline (omega=180) = [protein]-peptidylproline (omega=0). In terms of biological role, involved in protein export. Acts as a chaperone by maintaining the newly synthesized protein in an open conformation. Functions as a peptidyl-prolyl cis-trans isomerase. This is Trigger factor from Rhodococcus opacus (strain B4).